A 751-amino-acid chain; its full sequence is FAD-dependent monooxygenase atnA (751 aa).

A helical transmembrane segment spans residues 8–28; that stretch reads LIVGGGVAGLSLAIMLEAYGF. The FAD site is built by E34, G48, and R109. Residue Y218 is part of the active site. FAD-binding residues include D311 and A324. Helical transmembrane passes span 446–466, 481–501, 508–528, 563–583, 590–610, 639–659, 663–683, and 706–726; these read PLAT…PWSV, SEVF…LWVI, LLIS…YWGW, ALLP…ALAS, DWWP…STFL, IAVV…AALL, IISL…ALIV, and AWAV…LAGA.

This sequence belongs to the paxM FAD-dependent monooxygenase family. FAD is required as a cofactor.

The protein resides in the membrane. The protein operates within secondary metabolite biosynthesis; terpenoid biosynthesis. Functionally, FAD-dependent monooxygenase; part of the gene cluster that mediates the biosynthesis of the meroterpenoids arthripenoids. The pathway begins with the HR-PKS atnH that catalyzes two chain-extension steps to form a reduced triketide, which then primes the SAT domain in the NR-PKS atnG to initiate three more cycles of extension to give a linear hexaketide corresponding to the polyketide part of arthripenoids. The FAD-dependent monooxygenase atnJ then performs an oxidative decarboxylation at C11 of the atnH/atnG product, via an electrophilic aromatic hydroxylation with concomitant ipso-decarboxylation. The membrane-bound polyprenyl transferase atnF then introduces a farnesyl group before the FAD-dependent monooxygenase atnK functions as the first epoxidase on terminal C12'-C13' olefin, followed by a second epoxidation on C7'-C8' catalyzed by atnA. The terpene cyclase/mutase atnI then initiates the sequential tricyclic ring formation through protonation of the terminal epoxide and catalyzes the regioselective and stereoselective 6/6/6-tricyclic ring formation. The cytochrome P450 monooxygenase atnM is responsible for hydroxylating both C1' and C10'. The next steps may involve ketoreduction and acetyl transfer by the ketoreductase atnB and the acetyltransferase atnC, and lead to the production of arthripenoid B, the final biosynthetic product of the atn cluster. The hydroquinone moiety in arthripenoid B is prone to undergo spontaneous oxidation to afford a benzoquinone compound, a key intermediate for generating structure diversity. For instance, addition of a cysteine followed by ring contraction gives arthripenoid A, tautomerization gives the main product arthripenoid C, addition of a molecular of water or amine affords arthripenoid D or E, respectively, and loss of one water forms arthripenoid F. This chain is FAD-dependent monooxygenase atnA, found in Arthrinium sp.